The chain runs to 208 residues: Small ribosomal subunit protein uS4 (208 aa).

The S4 RNA-binding domain occupies 97–160 (SRLDNIVFRL…KKNDKIAEAL (64 aa)).

It belongs to the universal ribosomal protein uS4 family. In terms of assembly, part of the 30S ribosomal subunit. Contacts protein S5. The interaction surface between S4 and S5 is involved in control of translational fidelity.

Functionally, one of the primary rRNA binding proteins, it binds directly to 16S rRNA where it nucleates assembly of the body of the 30S subunit. In terms of biological role, with S5 and S12 plays an important role in translational accuracy. The polypeptide is Small ribosomal subunit protein uS4 (Mesoplasma florum (strain ATCC 33453 / NBRC 100688 / NCTC 11704 / L1) (Acholeplasma florum)).